The chain runs to 974 residues: Pentatricopeptide repeat-containing protein At5g61990, mitochondrial (974 aa).

A mitochondrion-targeting transit peptide spans 1–31 (MMGSMLFRKRTLVTRANFLLFRSFSVNVEKL). 24 PPR repeats span residues 96–130 (KLDS…NWPV), 150–184 (DGVL…ELVP), 185–219 (RLSR…NVVF), 220–250 (DVKT…TEKE), 257–275 (NVDG…GLVP), 276–310 (LKYT…GVSL), 311–345 (DNHT…GINI), 346–380 (KPYM…GLIP), 381–415 (QAQA…NIVI), 416–450 (SPYT…GCRP), 451–485 (NVVI…GIAP), 486–520 (DIFC…GLKP), 521–555 (NAFT…GVLP), 556–590 (NKVL…GILG), 591–625 (DAKT…GIAP), 626–660 (DVFS…GLTP), 661–695 (NVII…GLHP), 696–730 (NAVT…GLVP), 731–761 (DSFV…NKKG), 765–799 (STAP…SFDR), 804–838 (NDVT…NLMP), 839–873 (TVIT…GIEP), 874–908 (DHIM…NAVD), and 914–948 (SIST…QYIP).

Belongs to the PPR family. P subfamily.

Its subcellular location is the mitochondrion. The chain is Pentatricopeptide repeat-containing protein At5g61990, mitochondrial from Arabidopsis thaliana (Mouse-ear cress).